A 288-amino-acid polypeptide reads, in one-letter code: GDSL esterase/lipase At3g43550 (288 aa).

Residues 1–19 (MKLQIIWLALVLIAVETYA) form the signal peptide. N-linked (GlcNAc...) asparagine glycosylation occurs at asparagine 25. Catalysis depends on serine 37, which acts as the Nucleophile.

This sequence belongs to the 'GDSL' lipolytic enzyme family.

It is found in the secreted. In Arabidopsis thaliana (Mouse-ear cress), this protein is GDSL esterase/lipase At3g43550.